The following is a 116-amino-acid chain: Non-specific lipid-transfer protein 1 (116 aa).

Residues 1-25 form the signal peptide; it reads MARAQLVLVALVAALLLAAPHAAVA. 4 disulfide bridges follow: Cys-28–Cys-75, Cys-38–Cys-52, Cys-53–Cys-98, and Cys-73–Cys-112.

This sequence belongs to the plant LTP family. Aleurone (external part) of the seeds.

Functionally, plant non-specific lipid-transfer proteins transfer phospholipids as well as galactolipids across membranes. May play a role in wax or cutin deposition in the cell walls of expanding epidermal cells and certain secretory tissues. The protein is Non-specific lipid-transfer protein 1 (LTP) of Oryza sativa subsp. indica (Rice).